The following is a 224-amino-acid chain: UPF0758 protein CBUD_1789 (224 aa).

The MPN domain maps to Gln102–Leu224. His173, His175, and Asp186 together coordinate Zn(2+). Positions His173–Asp186 match the JAMM motif motif.

This sequence belongs to the UPF0758 family.

This chain is UPF0758 protein CBUD_1789, found in Coxiella burnetii (strain Dugway 5J108-111).